We begin with the raw amino-acid sequence, 313 residues long: Ribosomal RNA small subunit methyltransferase H (313 aa).

Residues Gly-35–His-37, Asp-55, Phe-79, Asp-101, and Gln-108 each bind S-adenosyl-L-methionine.

Belongs to the methyltransferase superfamily. RsmH family.

Its subcellular location is the cytoplasm. It catalyses the reaction cytidine(1402) in 16S rRNA + S-adenosyl-L-methionine = N(4)-methylcytidine(1402) in 16S rRNA + S-adenosyl-L-homocysteine + H(+). Its function is as follows. Specifically methylates the N4 position of cytidine in position 1402 (C1402) of 16S rRNA. The sequence is that of Ribosomal RNA small subunit methyltransferase H from Shigella flexneri serotype 5b (strain 8401).